The primary structure comprises 372 residues: Probable arabinan endo-1,5-alpha-L-arabinosidase B (372 aa).

Residues 1–16 (MTVLVALFCLVTWTLC) form the signal peptide. The span at 23–34 (STQGTQQPQQPE) shows a compositional bias: low complexity. The disordered stretch occupies residues 23 to 52 (STQGTQQPQQPEKTPHPHPQPEDAFPPTHA). The active-site Proton acceptor is Asp59. N-linked (GlcNAc...) asparagine glycosylation is present at Asn120. Residue Glu252 is the Proton donor of the active site. Residue Asn363 is glycosylated (N-linked (GlcNAc...) asparagine).

The protein belongs to the glycosyl hydrolase 43 family.

It is found in the secreted. It carries out the reaction Endohydrolysis of (1-&gt;5)-alpha-arabinofuranosidic linkages in (1-&gt;5)-arabinans.. The protein operates within glycan metabolism; L-arabinan degradation. Endo-1,5-alpha-L-arabinanase involved in degradation of pectin. Its preferred substrate is linear 1,5-alpha-L-arabinan. The polypeptide is Probable arabinan endo-1,5-alpha-L-arabinosidase B (abnB) (Aspergillus fumigatus (strain CBS 144.89 / FGSC A1163 / CEA10) (Neosartorya fumigata)).